We begin with the raw amino-acid sequence, 202 residues long: Remorin 1.4 (202 aa).

Residues 1-10 (MAEEEPKKVT) are compositionally biased toward basic and acidic residues. Residues 1-79 (MAEEEPKKVT…VEEEKKEGSV (79 aa)) form a disordered region. Residues 25-39 (EKPAAAADVAPQEKP) show a composition bias toward low complexity. Residues 40-50 (VAPPPVLPSPA) are compositionally biased toward pro residues. Over residues 68 to 79 (KEVEEEKKEGSV) the composition is skewed to basic and acidic residues. The stretch at 123–169 (ENNKKAAVEAELKKMEEQLEKKKAEYVEQMKNKIAQIHKEAEEKRAM) forms a coiled coil.

Belongs to the remorin family.

The polypeptide is Remorin 1.4 (Arabidopsis thaliana (Mouse-ear cress)).